The primary structure comprises 102 residues: MYAVLVTGGKQYRVAQGEKLRIEKLEVEVGSEIKFDNILMLGDSDGVKLGDALKGAAVTAKVLSQGRADKVRIIKFRRRKHHMKRQGHRQYYTEIEITGIAG.

Belongs to the bacterial ribosomal protein bL21 family. As to quaternary structure, part of the 50S ribosomal subunit. Contacts protein L20.

In terms of biological role, this protein binds to 23S rRNA in the presence of protein L20. The protein is Large ribosomal subunit protein bL21 of Stenotrophomonas maltophilia (strain K279a).